The chain runs to 558 residues: Membrane protein insertase YidC (558 aa).

5 helical membrane passes run 6-26 (SFFIIVFLIVSFILWKIWDDE), 359-379 (FIHTYTIDNWGISIILITVII), 434-454 (LGGCLPLLIQMPIFLALYYML), 480-500 (ILPIIMGITMFFIQKLSPTTI), and 513-533 (LVIFTIFFLWFPSGLVLYYII).

This sequence belongs to the OXA1/ALB3/YidC family. Type 1 subfamily. As to quaternary structure, interacts with the Sec translocase complex via SecD. Specifically interacts with transmembrane segments of nascent integral membrane proteins during membrane integration.

Its subcellular location is the cell inner membrane. Required for the insertion and/or proper folding and/or complex formation of integral membrane proteins into the membrane. Involved in integration of membrane proteins that insert both dependently and independently of the Sec translocase complex, as well as at least some lipoproteins. Aids folding of multispanning membrane proteins. This Blochmanniella floridana protein is Membrane protein insertase YidC.